Consider the following 189-residue polypeptide: Orotate phosphoribosyltransferase (189 aa).

Residues Arg-94, Lys-95, Lys-98, and 120–128 (EDVTTTGGS) contribute to the 5-phospho-alpha-D-ribose 1-diphosphate site. Positions 124 and 152 each coordinate orotate.

It belongs to the purine/pyrimidine phosphoribosyltransferase family. PyrE subfamily. In terms of assembly, homodimer. Requires Mg(2+) as cofactor.

The enzyme catalyses orotidine 5'-phosphate + diphosphate = orotate + 5-phospho-alpha-D-ribose 1-diphosphate. It participates in pyrimidine metabolism; UMP biosynthesis via de novo pathway; UMP from orotate: step 1/2. Functionally, catalyzes the transfer of a ribosyl phosphate group from 5-phosphoribose 1-diphosphate to orotate, leading to the formation of orotidine monophosphate (OMP). This chain is Orotate phosphoribosyltransferase, found in Thermococcus gammatolerans (strain DSM 15229 / JCM 11827 / EJ3).